A 244-amino-acid polypeptide reads, in one-letter code: tRNA (guanine-N(7)-)-methyltransferase (244 aa).

Residues 1-24 form a disordered region; it reads MTDSHVPHPESPAVEEGEERPHRR. 4 residues coordinate S-adenosyl-L-methionine: Glu-74, Glu-99, Asp-126, and Asp-149. Asp-149 is a catalytic residue. Residues Lys-153, Asp-185, and 222 to 225 each bind substrate; that span reads TKFE.

Belongs to the class I-like SAM-binding methyltransferase superfamily. TrmB family.

The catalysed reaction is guanosine(46) in tRNA + S-adenosyl-L-methionine = N(7)-methylguanosine(46) in tRNA + S-adenosyl-L-homocysteine. The protein operates within tRNA modification; N(7)-methylguanine-tRNA biosynthesis. Its function is as follows. Catalyzes the formation of N(7)-methylguanine at position 46 (m7G46) in tRNA. In Pseudomonas syringae pv. syringae (strain B728a), this protein is tRNA (guanine-N(7)-)-methyltransferase.